The sequence spans 556 residues: Valencene synthase (556 aa).

Residues 1-12 (MSTQVSASSLAQ) show a composition bias toward polar residues. The disordered stretch occupies residues 1-24 (MSTQVSASSLAQIPQPKNRPVANF). Mg(2+) is bound by residues Asp-310, Asp-314, and Glu-462. A DDXXD motif motif is present at residues 310–314 (DDIHD).

The protein belongs to the terpene synthase family. Tpsa subfamily. It depends on Mg(2+) as a cofactor. As to expression, expressed in flowers and anthers. Detected inside the pollen grains, but not in stems, leaves, tendrils, roots, seeds, pistils or caps.

The protein resides in the cytoplasm. The catalysed reaction is (2E,6E)-farnesyl diphosphate = (+)-valencene + diphosphate. It carries out the reaction (2E,6E)-farnesyl diphosphate = (-)-7-epi-alpha-selinene + diphosphate. The protein operates within secondary metabolite biosynthesis; terpenoid biosynthesis. Functionally, involved in the biosynthesis of valencene, a major volatile emitted from flowers of grapevine. Can use farnesyl diphosphate as substrate, but not geranyl diphosphate or geranylgeranyl diphosphate. Produces mainly (+)-valencene and (-)-7-epi-alpha-selinene along with five minor products. The chain is Valencene synthase (ValCS) from Vitis vinifera (Grape).